The following is a 456-amino-acid chain: Serine/threonine-protein kinase PBS1 (456 aa).

The tract at residues 1-57 (MGCFSCFDSSDDEKLNPVDESNHGQKKQSQPTVSNNISGLPSGGEKLSSKTNGGSKR) is disordered. Gly2 carries the N-myristoyl glycine lipid modification. Residues Cys3 and Cys6 are each lipidated (S-palmitoyl cysteine). Basic and acidic residues predominate over residues 12-23 (DEKLNPVDESNH). Ser21 is subject to Phosphoserine. The span at 27–39 (KQSQPTVSNNISG) shows a compositional bias: polar residues. One can recognise a Protein kinase domain in the interval 86–363 (FHPDTFLGEG…ADVVTALSYL (278 aa)). ATP contacts are provided by residues 92 to 100 (LGEGGFGRV) and Lys115. At Tyr160 the chain carries Phosphotyrosine. The active-site Proton acceptor is Asp213. Phosphoserine is present on residues Ser217 and Ser247. A phosphothreonine mark is found at Thr248 and Thr253. At Tyr261 the chain carries Phosphotyrosine. The Recognition motif required for RPS5-mediated plant resistance to P.syringae motif lies at 292–296 (SEMPH). Residues 368-456 (YDPSKDDSRR…QGTSESNSTG (89 aa)) are disordered. Composition is skewed to basic and acidic residues over residues 370–392 (PSKD…RNDD) and 400–429 (FDLE…RAVA). Polar residues predominate over residues 446–456 (EQGTSESNSTG).

Belongs to the protein kinase superfamily. Ser/Thr protein kinase family. As to quaternary structure, in infected plant cells, it interacts with the P.syringae virulence protein avrPphB. In uninfected plants, autophosphorylated form interacts with RPS5. Interacts with FLS2. Post-translationally, cleaved by avrPphB in infected plant cells. Its cleavage serves as a signal that triggers the RPS5-mediated defense system. In terms of processing, autophosphorylates. Autophosphorylation may be required to trigger the RPS5-mediated plant defense system. Palmitoylation at Cys-3 and Cys-6 are required for plasma membrane location that is essential for the RPS5-mediated plant defense response.

It localises to the cell membrane. It carries out the reaction L-seryl-[protein] + ATP = O-phospho-L-seryl-[protein] + ADP + H(+). It catalyses the reaction L-threonyl-[protein] + ATP = O-phospho-L-threonyl-[protein] + ADP + H(+). Its function is as follows. Protein kinase required for plant defense mechanism mediated by the disease resistance (R) protein RPS5. In case of infection by Pseudomonas syringae, AvrPphB triggers RPS5-mediated defense mechanism via the cleavage of PBS1. Both kinase activity and cleavage by avrPphB are independently required to trigger the RPS5-mediated resistance. Contributes to PAMP-triggered immunity (PTI) signaling and defense responses downstream of FLS2. The protein is Serine/threonine-protein kinase PBS1 of Arabidopsis thaliana (Mouse-ear cress).